A 158-amino-acid chain; its full sequence is Transcriptional repressor NrdR (158 aa).

Residues 1-20 form a disordered region; the sequence is MRCPSCGSLDTQVKDSRPTE. A zinc finger spans residues 3–34; it reads CPSCGSLDTQVKDSRPTEDSSVIRRRRVCLTC. Positions 49–139 constitute an ATP-cone domain; the sequence is LTVIKRNGRR…VYRNFREAKD (91 aa).

It belongs to the NrdR family. It depends on Zn(2+) as a cofactor.

Functionally, negatively regulates transcription of bacterial ribonucleotide reductase nrd genes and operons by binding to NrdR-boxes. The chain is Transcriptional repressor NrdR from Afipia carboxidovorans (strain ATCC 49405 / DSM 1227 / KCTC 32145 / OM5) (Oligotropha carboxidovorans).